Reading from the N-terminus, the 591-residue chain is Alternative cytochrome c oxidase subunit 1 (591 aa).

Residues 40 to 60 (VIAIQYSLTASAIGLVALVLS) form a helical membrane-spanning segment. H88 provides a ligand contact to heme b. The next 11 membrane-spanning stretches (helical) occupy residues 90-110 (MIMV…NYLI), 126-146 (MLSY…FFVP), 172-192 (GIVL…MGGL), 215-235 (VWGI…LFVG), 274-294 (LFWF…FGIV), 313-333 (VWAI…HMYV), 337-357 (YPYF…PTAI), 377-397 (MLFA…GLFL), 412-432 (VVAH…LGAI), 453-473 (FWVT…LGLL), and 498-518 (FITV…FNLV). Residues H280, Y284, H329, and H330 each coordinate Cu cation. A cross-link (1'-histidyl-3'-tyrosine (His-Tyr)) is located at residues 280–284 (HPEVY). The heme b site is built by H415 and H417.

The protein belongs to the heme-copper respiratory oxidase family. In terms of assembly, this alternate cytochrome c oxidase consists of a subunit I and two cytochromes c. Equivalents to subunit 2 and 3 are not present in this complex.

The protein resides in the cell membrane. The enzyme catalyses 4 Fe(II)-[cytochrome c] + O2 + 8 H(+)(in) = 4 Fe(III)-[cytochrome c] + 2 H2O + 4 H(+)(out). Its function is as follows. Cytochrome c oxidase is the component of the respiratory chain that catalyzes the reduction of oxygen to water. Subunits 1-3 form the functional core of the enzyme complex. Co I is the catalytic subunit of the enzyme. Electrons originating in cytochrome c are transferred via the copper A center of subunit 2 and a low-spin heme of subunit 1 to the bimetallic center formed by a high-spin heme and copper B. This Bradyrhizobium diazoefficiens (strain JCM 10833 / BCRC 13528 / IAM 13628 / NBRC 14792 / USDA 110) protein is Alternative cytochrome c oxidase subunit 1 (coxN).